A 144-amino-acid chain; its full sequence is Probable 4-amino-4-deoxy-L-arabinose-phosphoundecaprenol flippase subunit ArnF (144 aa).

The Cytoplasmic portion of the chain corresponds to 1–6 (MTHRRA). The helical transmembrane segment at 7–24 (TLCAMASVALVSAAQLGM) threads the bilayer. Residues 25-56 (RWSMSRLPSPVQWLEMQEHAQLDLSALRVVCA) lie on the Periplasmic side of the membrane. Residues 57–77 (SITAYALSMLFWLLALRVLPL) form a helical membrane-spanning segment. Topologically, residues 78–80 (SRA) are cytoplasmic. The chain crosses the membrane as a helical span at residues 81-101 (YSLLSISYALVYTLAATLPFF). The Periplasmic segment spans residues 102 to 104 (HET). Residues 105-125 (FTVSKTVGVSLIVAGVLTINL) form a helical membrane-spanning segment. The Cytoplasmic segment spans residues 126 to 144 (RRLPRPSPQDLSHENQRFR).

This sequence belongs to the ArnF family. In terms of assembly, heterodimer of ArnE and ArnF.

It localises to the cell inner membrane. Its pathway is bacterial outer membrane biogenesis; lipopolysaccharide biosynthesis. Its function is as follows. Translocates 4-amino-4-deoxy-L-arabinose-phosphoundecaprenol (alpha-L-Ara4N-phosphoundecaprenol) from the cytoplasmic to the periplasmic side of the inner membrane. The sequence is that of Probable 4-amino-4-deoxy-L-arabinose-phosphoundecaprenol flippase subunit ArnF from Pseudomonas syringae pv. syringae (strain B728a).